The sequence spans 1220 residues: Plasma membrane calcium-transporting ATPase 3 (1220 aa).

Positions 1–20 are enriched in polar residues; sequence MGDMANSSIEFHPKPQQQRD. The segment at 1–23 is disordered; it reads MGDMANSSIEFHPKPQQQRDVPQ. The Cytoplasmic segment spans residues 1–97; it reads MGDMANSSIE…NFIPPKQPKT (97 aa). A Phosphoserine modification is found at S8. A helical transmembrane segment spans residues 98–118; it reads FLQLVWEALQDVTLIILEVAA. Topologically, residues 119 to 155 are extracellular; the sequence is IVSLGLSFYAPPGEESEACGNVSGGAEDEGEAEAGWI. The helical transmembrane segment at 156–176 threads the bilayer; sequence EGAAILLSVICVVLVTAFNDW. Topologically, residues 177 to 364 are cytoplasmic; it reads SKEKQFRGLQ…KEKSVLQGKL (188 aa). The segment at 298-355 is disordered; the sequence is EEEKKDKKGKQQDGAMESSQTKAKKQDGAVAMEMQPLKSAEGGEMEEREKKKANAPKK. Composition is skewed to basic and acidic residues over residues 299–308 and 342–355; these read EEKKDKKGKQ and MEEREKKKANAPKK. Residues 365–384 form a helical membrane-spanning segment; that stretch reads TKLAVQIGKAGLVMSAITVI. Residues 385–417 lie on the Extracellular side of the membrane; it reads ILVLYFVIETFVVEGRTWLAECTPVYVQYFVKF. A helical transmembrane segment spans residues 418–435; it reads FIIGVTVLVVAVPEGLPL. Residues 436–849 are Cytoplasmic-facing; that stretch reads AVTISLAYSV…MWGRNVYDSI (414 aa). D473 acts as the 4-aspartylphosphate intermediate in catalysis. 2 residues coordinate Mg(2+): D794 and D798. Residues 850–869 form a helical membrane-spanning segment; the sequence is SKFLQFQLTVNVVAVIVAFT. Residues 870 to 879 are Extracellular-facing; it reads GACITQDSPL. A helical transmembrane segment spans residues 880 to 900; it reads KAVQMLWVNLIMDTFASLALA. Residues 901 to 920 are Cytoplasmic-facing; that stretch reads TEPPTESLLLRKPYGRDKPL. A helical membrane pass occupies residues 921 to 943; it reads ISRTMMKNILGHAVYQLAIIFTL. The Extracellular portion of the chain corresponds to 944–961; the sequence is LFVGELFFDIDSGRNAPL. A helical transmembrane segment spans residues 962–983; that stretch reads HSPPSEHYTIIFNTFVMMQLFN. At 984-1002 the chain is on the cytoplasmic side; that stretch reads EINARKIHGERNVFDGIFS. A helical transmembrane segment spans residues 1003–1024; that stretch reads NPIFCTIVLGTFGIQIVIVQFG. Residues 1025 to 1034 are Extracellular-facing; it reads GKPFSCSPLS. A helical membrane pass occupies residues 1035–1056; it reads TEQWLWCLFVGVGELVWGQVIA. Topologically, residues 1057 to 1220 are cytoplasmic; the sequence is TIPTSQLKCL…SPLHSVETSL (164 aa). The residue at position 1079 (T1079) is a Phosphothreonine. Residues 1097 to 1114 form a calmodulin-binding subdomain A region; that stretch reads LRRGQILWFRGLNRIQTQ. A Phosphothreonine; by PKC modification is found at T1113. The segment at 1115 to 1124 is calmodulin-binding subdomain B; sequence IRVVKAFRSS. The tract at residues 1166 to 1186 is disordered; that stretch reads ENEERLRAPPPPSPNQNNNAI.

This sequence belongs to the cation transport ATPase (P-type) (TC 3.A.3) family. Type IIB subfamily. In terms of assembly, interacts with PDZD11. Interacts (via N-terminus) with YWHAE. In terms of tissue distribution, highly expressed in the cerebellum. Expressed in adrenal glands.

It localises to the cell membrane. It is found in the presynaptic cell membrane. The catalysed reaction is Ca(2+)(in) + ATP + H2O = Ca(2+)(out) + ADP + phosphate + H(+). Its activity is regulated as follows. Down-regulated by YWHAE. In terms of biological role, ATP-driven Ca(2+) ion pump involved in the maintenance of basal intracellular Ca(2+) levels at the presynaptic terminals. Uses ATP as an energy source to transport cytosolic Ca(2+) ions across the plasma membrane to the extracellular compartment. May counter-transport protons, but the mechanism and the stoichiometry of this Ca(2+)/H(+) exchange remains to be established. In Homo sapiens (Human), this protein is Plasma membrane calcium-transporting ATPase 3.